The sequence spans 113 residues: Hydrogenase maturation factor HypA (113 aa).

Residue histidine 2 coordinates Ni(2+). The Zn(2+) site is built by cysteine 73, cysteine 75, cysteine 89, and cysteine 92.

Belongs to the HypA/HybF family.

Its function is as follows. Involved in the maturation of [NiFe] hydrogenases. Required for nickel insertion into the metal center of the hydrogenase. In Methanocella arvoryzae (strain DSM 22066 / NBRC 105507 / MRE50), this protein is Hydrogenase maturation factor HypA.